Consider the following 97-residue polypeptide: Citrate lyase acyl carrier protein (97 aa).

The residue at position 14 (serine 14) is an O-(phosphoribosyl dephospho-coenzyme A)serine.

The protein belongs to the CitD family. In terms of assembly, oligomer with a subunit composition of (alpha,beta,gamma)6.

The protein resides in the cytoplasm. In terms of biological role, covalent carrier of the coenzyme of citrate lyase. This chain is Citrate lyase acyl carrier protein, found in Oenococcus oeni (strain ATCC BAA-331 / PSU-1).